We begin with the raw amino-acid sequence, 741 residues long: MRWILFILFCLLGAPAHAVSIPGVTTTTTTDSTTEPAPEPDIEQKKAAYGALADVLDNDTSRKELIDQLRTVAATPPAEPVPKIVPPTLVEEQTVLQKVTEVSRHYGEALSARFGQLYRNITGSPHKPFNPQTFSNALTHFSMLAVLVFGFYWLIRLCALPLYRKMGQWARQKNRERSNWLQLPAMIIGAFIIDLLLLALTLFVGQVLSDNLNAGSRTIAFQQSLFLNAFALIEFFKAVLRLIFCPNVAELRPFTIQDESARYWSRRLSWLSSLIGYGLIVAVPIISNQVNVQIGALANVIIMLCMTVWALYLIFRNKKEITQHLLNFAEHSLAFFSLFIRAFALVWHWLASAYFIVLFFFSLFDPGNSLKFMMGATVRSLAIIGIAAFVSGMFSRWLAKTITLSPHTQRNYPELQKRLNGWLSAALKTARILTVCVAVMLLLSAWGLFDFWNWLQNGAGQKTVDILIRIALILFFSAVGWTVLASLIENRLASDIHGRPLPSARTRTLLTLFRNALAVIISTITIMIVLSEIGVNIAPLLAGAGALGLAISFGSQTLVKDIITGVFIQFENGMNTGDLVTIGPLTGTVERMSIRSVGVRQDTGAYHIIPWSSITTFANFVRGIGSVVANYDVDRHEDADKANQALKDAVAELMENEEIRGLIIGEPNFAGIVGLSNTAFTLRVSFTTLPLKQWTVRFALDSQVKKHFDLAGVRAPVQTYQVLPAPGATPAEPLPPGEPTL.

Residues 1 to 18 (MRWILFILFCLLGAPAHA) form the signal peptide. Residues 22–42 (PGVTTTTTTDSTTEPAPEPDI) are disordered. The segment covering 25-34 (TTTTTTDSTT) has biased composition (low complexity). Transmembrane regions (helical) follow at residues 143-163 (MLAVLVFGFYWLIRLCALPLY), 185-205 (AMIIGAFIIDLLLLALTLFVG), 225-245 (LFLNAFALIEFFKAVLRLIFC), 268-288 (LSWLSSLIGYGLIVAVPIISN), 294-314 (IGALANVIIMLCMTVWALYLI), 343-363 (FALVWHWLASAYFIVLFFFSL), 372-392 (FMMGATVRSLAIIGIAAFVSG), 432-452 (ILTVCVAVMLLLSAWGLFDFW), 466-486 (ILIRIALILFFSAVGWTVLAS), 509-529 (LLTLFRNALAVIISTITIMIV), and 533-553 (IGVNIAPLLAGAGALGLAISF).

Belongs to the MscS (TC 1.A.23) family. Homoheptamer.

The protein resides in the cell inner membrane. Functionally, mechanosensitive channel that protects cells against hypoosmotic stress when highly overexpressed. This chain is Moderate conductance mechanosensitive channel YbiO (ybiO), found in Escherichia coli (strain K12).